Consider the following 309-residue polypeptide: Glutaminase (309 aa).

Substrate-binding residues include serine 64, asparagine 114, glutamate 160, asparagine 167, tyrosine 191, tyrosine 243, and valine 261.

This sequence belongs to the glutaminase family. In terms of assembly, homotetramer.

It catalyses the reaction L-glutamine + H2O = L-glutamate + NH4(+). The polypeptide is Glutaminase (Methylorubrum populi (strain ATCC BAA-705 / NCIMB 13946 / BJ001) (Methylobacterium populi)).